Consider the following 434-residue polypeptide: 3-phosphoshikimate 1-carboxyvinyltransferase (434 aa).

3 residues coordinate 3-phosphoshikimate: Lys22, Ser23, and Arg27. Lys22 provides a ligand contact to phosphoenolpyruvate. 2 residues coordinate phosphoenolpyruvate: Gly93 and Arg121. Residues Ser168, Ser169, Gln170, Ser199, Asp320, and Lys347 each contribute to the 3-phosphoshikimate site. Gln170 is a phosphoenolpyruvate binding site. Asp320 serves as the catalytic Proton acceptor. 3 residues coordinate phosphoenolpyruvate: Arg351, Arg394, and Lys419.

It belongs to the EPSP synthase family. Monomer.

It is found in the cytoplasm. The catalysed reaction is 3-phosphoshikimate + phosphoenolpyruvate = 5-O-(1-carboxyvinyl)-3-phosphoshikimate + phosphate. It functions in the pathway metabolic intermediate biosynthesis; chorismate biosynthesis; chorismate from D-erythrose 4-phosphate and phosphoenolpyruvate: step 6/7. Its function is as follows. Catalyzes the transfer of the enolpyruvyl moiety of phosphoenolpyruvate (PEP) to the 5-hydroxyl of shikimate-3-phosphate (S3P) to produce enolpyruvyl shikimate-3-phosphate and inorganic phosphate. This Burkholderia orbicola (strain MC0-3) protein is 3-phosphoshikimate 1-carboxyvinyltransferase.